A 478-amino-acid polypeptide reads, in one-letter code: Cysteine--tRNA ligase (478 aa).

Cysteine 29 provides a ligand contact to Zn(2+). Residues alanine 31–histidine 41 carry the 'HIGH' region motif. Zn(2+) contacts are provided by cysteine 207, histidine 232, and glutamate 236. The 'KMSKS' region motif lies at lysine 263 to serine 267. Position 266 (lysine 266) interacts with ATP.

This sequence belongs to the class-I aminoacyl-tRNA synthetase family. Monomer. Zn(2+) is required as a cofactor.

It is found in the cytoplasm. The enzyme catalyses tRNA(Cys) + L-cysteine + ATP = L-cysteinyl-tRNA(Cys) + AMP + diphosphate. In Corynebacterium jeikeium (strain K411), this protein is Cysteine--tRNA ligase.